The chain runs to 102 residues: MFAIIETGGKQLKVEQGQEIWVEKLNAEEGSTFTFDQVLMVGGETVKVGSPVVEGATVTAKVEKHGRGKKITVFKYKPKKNYKRKQGHRQPYTKLVIEAINA.

Belongs to the bacterial ribosomal protein bL21 family. In terms of assembly, part of the 50S ribosomal subunit. Contacts protein L20.

Functionally, this protein binds to 23S rRNA in the presence of protein L20. In Macrococcus caseolyticus (strain JCSC5402) (Macrococcoides caseolyticum), this protein is Large ribosomal subunit protein bL21.